The sequence spans 215 residues: WAT1-related protein At3g28060 (215 aa).

Transmembrane regions (helical) follow at residues 48-68 (IIIGSSGEVFWVEYTLIAVAY), 82-102 (FALALSHNVCVSISCAFVSLF), 117-137 (IMLICIVATGVVNSTSYVVES), 146-166 (VFLAMFRPLSIVTAVVLGAIF), and 176-196 (VIGGTLISIGFSVHNSLFHIA). In terms of domain architecture, EamA spans 65-186 (AVAYIVQTHI…IGGTLISIGF (122 aa)).

It belongs to the drug/metabolite transporter (DMT) superfamily. Plant drug/metabolite exporter (P-DME) (TC 2.A.7.4) family.

The protein resides in the membrane. The chain is WAT1-related protein At3g28060 from Arabidopsis thaliana (Mouse-ear cress).